The following is a 220-amino-acid chain: Large ribosomal subunit protein bL21 (220 aa).

The tract at residues Ser109–Pro158 is disordered. The segment covering Thr118–Lys146 has biased composition (basic and acidic residues).

It belongs to the bacterial ribosomal protein bL21 family. In terms of assembly, part of the 50S ribosomal subunit. Contacts protein L20.

Functionally, this protein binds to 23S rRNA in the presence of protein L20. In Chelativorans sp. (strain BNC1), this protein is Large ribosomal subunit protein bL21.